A 69-amino-acid polypeptide reads, in one-letter code: Consomatin Be1 (69 aa).

The signal sequence occupies residues Met1–Gly22. Positions Gly23 to Arg57 are excised as a propeptide. Residue Glu58 is modified to 4-carboxyglutamate. Cys62 and Cys67 are oxidised to a cystine. D-tryptophan is present on Trp64. Pro68 and Pro69 each carry 4-hydroxyproline.

Belongs to the conotoxin C superfamily. Consomatin family. In terms of tissue distribution, expressed by the venom duct.

Its subcellular location is the secreted. In terms of biological role, moderately activates human somatostatin receptors (SSTR) with a preferential activation of SSTR1 and SSTR4. In vivo, does not cause behavioral changes in mice within a few minutes of intracranial injection, but causes a progressive loss of movement thereafter. Four to five hours after injection, mice recover, even with the highest dose tested. Shows antinociception and antihyperalgesia activities in two mouse models of acute pain, most probably by acting outside the central nervous system. The chain is Consomatin Be1 from Conus betulinus (Beech cone).